Reading from the N-terminus, the 126-residue chain is Aspartate 1-decarboxylase (126 aa).

S25 (schiff-base intermediate with substrate; via pyruvic acid) is an active-site residue. The residue at position 25 (S25) is a Pyruvic acid (Ser). Position 57 (T57) interacts with substrate. The active-site Proton donor is the Y58. 73–75 (GAA) contributes to the substrate binding site.

This sequence belongs to the PanD family. In terms of assembly, heterooctamer of four alpha and four beta subunits. Pyruvate is required as a cofactor. Post-translationally, is synthesized initially as an inactive proenzyme, which is activated by self-cleavage at a specific serine bond to produce a beta-subunit with a hydroxyl group at its C-terminus and an alpha-subunit with a pyruvoyl group at its N-terminus.

The protein resides in the cytoplasm. The catalysed reaction is L-aspartate + H(+) = beta-alanine + CO2. The protein operates within cofactor biosynthesis; (R)-pantothenate biosynthesis; beta-alanine from L-aspartate: step 1/1. Functionally, catalyzes the pyruvoyl-dependent decarboxylation of aspartate to produce beta-alanine. This chain is Aspartate 1-decarboxylase, found in Pectobacterium carotovorum subsp. carotovorum (strain PC1).